The following is a 224-amino-acid chain: BTB/POZ domain-containing protein At5g48510 (224 aa).

The 75-residue stretch at 24–98 folds into the BTB domain; that stretch reads VDVMLKAKNS…ICSDGSMLSA (75 aa).

In terms of assembly, interacts with CUL3A.

It functions in the pathway protein modification; protein ubiquitination. Its function is as follows. May act as a substrate-specific adapter of an E3 ubiquitin-protein ligase complex (CUL3-RBX1-BTB) which mediates the ubiquitination and subsequent proteasomal degradation of target proteins. This chain is BTB/POZ domain-containing protein At5g48510, found in Arabidopsis thaliana (Mouse-ear cress).